The sequence spans 1058 residues: Lon protease homolog, mitochondrial (1058 aa).

A mitochondrion-targeting transit peptide spans 1–47 (MLTRIRNAGVGGNAARRVRLLAGYTGARMAHAAALNSTTGAGGAARA). Residues 72–151 (GGQCILKQDR…RSNPPSEGEV (80 aa)) form a disordered region. Composition is skewed to basic and acidic residues over residues 78–97 (KQDREPDQSDDKKVPPRAEE) and 106–118 (DEEAERQPREEQA). The span at 129 to 142 (GSGGSASSAGGGGR) shows a compositional bias: gly residues. The Lon N-terminal domain occupies 158 to 412 (LMVLPMSNRP…KALVFIKKEV (255 aa)). 564 to 571 (GPPGVGKT) provides a ligand contact to ATP. Positions 778–814 (TPKSAPAETNIEPENGKPDASAKPLTNNLPAPEPLNI) are disordered. Residues 844-1030 (KTPAGVVMGL…DDVFNVLFGS (187 aa)) enclose the Lon proteolytic domain. Catalysis depends on residues Ser-936 and Lys-979.

It belongs to the peptidase S16 family. In terms of assembly, homohexamer or homoheptamer. Organized in a ring with a central cavity.

Its subcellular location is the mitochondrion matrix. The enzyme catalyses Hydrolysis of proteins in presence of ATP.. ATP-dependent serine protease that mediates the selective degradation of misfolded, unassembled or oxidatively damaged polypeptides as well as certain short-lived regulatory proteins in the mitochondrial matrix. May also have a chaperone function in the assembly of inner membrane protein complexes. Participates in the regulation of mitochondrial gene expression and in the maintenance of the integrity of the mitochondrial genome. Binds to mitochondrial DNA in a site-specific manner. This chain is Lon protease homolog, mitochondrial, found in Eremothecium gossypii (strain ATCC 10895 / CBS 109.51 / FGSC 9923 / NRRL Y-1056) (Yeast).